The chain runs to 1254 residues: Structural polyprotein (1254 aa).

Positions 1-33 (MFPFQPMYPMQPMPYRNPFAAPRRPWFPRTDPF) are necessary for nucleocapsid assembly and virus assembly. The segment at 33-68 (FLAMQVQELTRSMANLTFKQRRGAPPEGPPAKKSKR) is host transcription inhibition. The short motif at 41–48 (LTRSMANL) is the Supraphysiological nuclear export signal element. The N-linked (GlcNAc...) asparagine; by host glycan is linked to N47. Positions 48-118 (LTFKQRRGAP…KKPGKRQRMV (71 aa)) are disordered. The short motif at 64-68 (KKSKR) is the Nuclear localization signal element. Basic residues predominate over residues 76 to 91 (GGQRKKKKNEGKKKAK). The interval 90–126 (AKTGPPNLKTQNGNKKKTNKKPGKRQRMVMKLESDKT) is binding to the viral RNA. 2 positions are modified to phosphothreonine: T92 and T107. Over residues 103-117 (NKKKTNKKPGKRQRM) the composition is skewed to basic residues. Positions 111 to 125 (PGKRQRMVMKLESDK) are ribosome-binding. Position 123 is a phosphoserine (S123). Residues 125-274 (KTFPIMLEGK…KYTPENCEQW (150 aa)) form the Peptidase S3 domain. T126 bears the Phosphothreonine mark. H151 (charge relay system) is an active-site residue. Residues 167–172 (KKASKY) are interaction with spike glycoprotein E2. Catalysis depends on charge relay system residues D173 and S225. The tract at residues 259–263 (EKGVT) is interaction with spike glycoprotein E2. The interval 275–286 (SLVTTMCLLANV) is functions as an uncleaved signal peptide for the precursor of protein E3/E2. Over 275 to 702 (SLVTTMCLLA…YHRYPMSTIT (428 aa)) the chain is Extracellular. 7 disulfides stabilise this stretch: C281–C290, C352–C456, C355–C360, C423–C437, C484–C599, C533–C559, and C535–C553. A glycan (N-linked (GlcNAc...) asparagine; by host) is linked at N285. 2 N-linked (GlcNAc...) asparagine; by host glycosylation sites follow: N545 and N651. The chain crosses the membrane as a helical span at residues 703–723 (GLSICAAIVAVSIAASTWLLC). The segment at 724-728 (RSRAS) is interaction with the capsid protein. At 724 to 756 (RSRASCLTPYRLTPNAKMPLCLAVLCCARSARA) the chain is on the cytoplasmic side. 3 S-palmitoyl cysteine; by host lipidation sites follow: C729, C749, and C750. C729 and C750 form a disulfide bridge. Residues 735 to 754 (LTPNAKMPLCLAVLCCARSA) form a transient transmembrane before p62-6K protein processing region. Topologically, residues 757–768 (ETTWESLDHLWN) are extracellular. A helical transmembrane segment spans residues 769-789 (NNQQMFWTQLLIPLAALIVVT). R790 is a topological domain (cytoplasmic). A helical transmembrane segment spans residues 791–811 (LLKCMCCVVPFLVVAGAAGAG). At 812–1224 (AYEHATTMPN…SKTAWTWLTS (413 aa)) the chain is on the extracellular side. 4 disulfides stabilise this stretch: C861-C926, C874-C906, C875-C908, and C880-C890. Residues 896–913 (VYPFMWGGAYCFCDTENT) form an E1 fusion peptide loop region. N-linked (GlcNAc...) asparagine; by host glycans are attached at residues N946 and N1082. Intrachain disulfides connect C1071/C1083, C1113/C1188, C1118/C1192, and C1140/C1182. A helical transmembrane segment spans residues 1225–1245 (LLGGSAVIIIIGLVLATLVAM). The Cytoplasmic segment spans residues 1246-1254 (YVLTNQKHN).

Homodimer. Homomultimer. Interacts with host karyopherin KPNA4; this interaction allows the nuclear import of the viral capsid protein. Interacts with spike glycoprotein E2. Interacts with host IRAK1; the interaction leads to inhibition of IRAK1-dependent signaling. Part of a tetrameric complex composed of host CRM1, host importin alpha/beta dimer and the viral capsid; this complex blocks the receptor-mediated transport through the nuclear pore. Interacts with host phosphatase PPP1CA; this interaction dephosphorylates the capsid protein, which increases its ability to bind to the viral genome. As to quaternary structure, the precursor of protein E3/E2 and E1 form a heterodimer shortly after synthesis. In terms of assembly, interacts with spike glycoprotein E2. The precursor of protein E3/E2 and E1 form a heterodimer shortly after synthesis. Processing of the precursor of protein E3/E2 into E2 and E3 results in a heterodimer of the spike glycoproteins E2 and E1. Spike at virion surface are constituted of three E2-E1 heterodimers. After target cell attachment and endocytosis, E1 change conformation to form homotrimers. Interacts with 6K protein. Interacts with host LDLRAD3; this interaction mediates viral entry to the host cell. Interacts with spike glycoprotein E1. Processing of the precursor of protein E3/E2 into E2 and E3 results in a heterodimer of the spike glycoproteins E2 and E1. Spike at virion surface are constituted of a trimer of E2-E1 heterodimers. Interacts with 6K protein. Interacts with host LDLRAD3; this interaction mediates viral entry to the host cell. As to quaternary structure, oligomer. Interacts with spike glycoprotein E1. Interacts with spike glycoprotein E2. In terms of processing, structural polyprotein: Specific enzymatic cleavages in vivo yield mature proteins. Capsid protein is auto-cleaved during polyprotein translation, unmasking a signal peptide at the N-terminus of the precursor of E3/E2. The remaining polyprotein is then targeted to the host endoplasmic reticulum, where host signal peptidase cleaves it into pE2, 6K and E1 proteins. pE2 is further processed to mature E3 and E2 by host furin in trans-Golgi vesicle. Post-translationally, phosphorylated on serine and threonine residues. Palmitoylated via thioester bonds. These palmitoylations may induce disruption of the C-terminus transmembrane. This would result in the reorientation of E2 C-terminus from lumenal to cytoplasmic side. In terms of processing, N-glycosylated. Post-translationally, palmitoylated via thioester bonds.

The protein localises to the virion. It is found in the host cytoplasm. The protein resides in the host cell membrane. It localises to the host nucleus. Its subcellular location is the virion membrane. The protein localises to the host Golgi apparatus. It is found in the host trans-Golgi network. The protein resides in the host endoplasmic reticulum. It catalyses the reaction Autocatalytic release of the core protein from the N-terminus of the togavirus structural polyprotein by hydrolysis of a -Trp-|-Ser- bond.. Forms an icosahedral capsid with a T=4 symmetry composed of 240 copies of the capsid protein surrounded by a lipid membrane through which penetrate 80 spikes composed of trimers of E1-E2 heterodimers. The capsid protein binds to the viral RNA genome at a site adjacent to a ribosome binding site for viral genome translation following genome release. Possesses a protease activity that results in its autocatalytic cleavage from the nascent structural protein. Following its self-cleavage, the capsid protein transiently associates with ribosomes, and within several minutes the protein binds to viral RNA and rapidly assembles into icosahedric core particles. The resulting nucleocapsid eventually associates with the cytoplasmic domain of the spike glycoprotein E2 at the cell membrane, leading to budding and formation of mature virions. In case of infection, new virions attach to target cells and after clathrin-mediated endocytosis their membrane fuses with the host endosomal membrane. This leads to the release of the nucleocapsid into the cytoplasm, followed by an uncoating event necessary for the genomic RNA to become accessible. The uncoating might be triggered by the interaction of capsid proteins with ribosomes. Binding of ribosomes would release the genomic RNA since the same region is genomic RNA-binding and ribosome-binding. Specifically inhibits interleukin-1 receptor-associated kinase 1/IRAK1-dependent signaling during viral entry, representing a means by which the alphaviruses may evade innate immune detection and activation prior to viral gene expression. Inhibits host transcription. Forms a tetrameric complex with XPO1/CRM1 and the nuclear import receptor importin. This complex blocks the central channel of host nuclear pores thereby inhibiting the receptor-mediated nuclear transport and thus the host mRNA and rRNA transcription. The inhibition of transcription is linked to a cytopathic effect on the host cell. In terms of biological role, provides the signal sequence for the translocation of the precursor of protein E3/E2 to the host endoplasmic reticulum. Furin-cleaved E3 remains associated with spike glycoprotein E1 and mediates pH protection of the latter during the transport via the secretory pathway. After virion release from the host cell, the assembly protein E3 is gradually released in the extracellular space. Its function is as follows. Plays a role in viral attachment to target host cell, by binding to the cell receptor LDLRAD3. Synthesized as a p62 precursor which is processed by furin at the cell membrane just before virion budding, giving rise to E2-E1 heterodimer. The p62-E1 heterodimer is stable, whereas E2-E1 is unstable and dissociate at low pH. p62 is processed at the last step, presumably to avoid E1 fusion activation before its final export to cell surface. E2 C-terminus contains a transitory transmembrane that would be disrupted by palmitoylation, resulting in reorientation of the C-terminal tail from lumenal to cytoplasmic side. This step is critical since E2 C-terminus is involved in budding by interacting with capsid proteins. This release of E2 C-terminus in cytoplasm occurs lately in protein export, and precludes premature assembly of particles at the endoplasmic reticulum membrane. Functionally, acts as a viroporin that participates in virus glycoprotein processing and transport to the plasma membrane, cell permeabilization and budding of viral particles. Disrupts the calcium homeostasis of the cell, probably at the endoplasmic reticulum level. This leads to cytoplasmic calcium elevation. Because of its lipophilic properties, the 6K protein is postulated to influence the selection of lipids that interact with the transmembrane domains of the glycoproteins, which, in turn, affects the deformability of the bilayer required for the extreme curvature that occurs as budding proceeds. Present in low amount in virions, about 3% compared to viral glycoproteins. Class II viral fusion protein. Fusion activity is inactive as long as E1 is bound to E2 in mature virion. After virus attachment to cell receptor LDLRAD3 and endocytosis, acidification of the endosome induce dissociation of E1/E2 heterodimer and concomitant trimerization of the E1 subunits. This E1 trimer is fusion active, and promotes release of viral nucleocapsid in cytoplasm after endosome and viral membrane fusion. Efficient fusion requires the presence of cholesterol and sphingolipid in the target membrane. This chain is Structural polyprotein, found in Venezuelan equine encephalitis virus (strain Everglades Fe3-7c) (VEEV).